Consider the following 577-residue polypeptide: Eukaryotic translation initiation factor 3 subunit D (577 aa).

Positions 103–177 are disordered; the sequence is DSTKTRFGRG…KDYDKPQRNR (75 aa). Residues 166–177 are compositionally biased toward basic and acidic residues; the sequence is GWKDYDKPQRNR. An RNA gate region spans residues 305–319; the sequence is TLDMVTVNENAADAP. The tract at residues 558 to 577 is disordered; the sequence is GSFEDDGEGDVIEENVEEED. Over residues 560 to 577 the composition is skewed to acidic residues; that stretch reads FEDDGEGDVIEENVEEED.

It belongs to the eIF-3 subunit D family. Component of the eukaryotic translation initiation factor 3 (eIF-3) complex.

It is found in the cytoplasm. Functionally, mRNA cap-binding component of the eukaryotic translation initiation factor 3 (eIF-3) complex, which is involved in protein synthesis of a specialized repertoire of mRNAs and, together with other initiation factors, stimulates binding of mRNA and methionyl-tRNAi to the 40S ribosome. The eIF-3 complex specifically targets and initiates translation of a subset of mRNAs involved in cell proliferation. In the eIF-3 complex, eif3d specifically recognizes and binds the 7-methylguanosine cap of a subset of mRNAs. This chain is Eukaryotic translation initiation factor 3 subunit D, found in Sclerotinia sclerotiorum (strain ATCC 18683 / 1980 / Ss-1) (White mold).